Consider the following 968-residue polypeptide: Protein translocase subunit SecA (968 aa).

ATP-binding positions include glutamine 99, 117–121 (GEGKT), and aspartate 631.

This sequence belongs to the SecA family. In terms of assembly, monomer and homodimer. Part of the essential Sec protein translocation apparatus which comprises SecA, SecYEG and auxiliary proteins SecDF. Other proteins may also be involved.

The protein resides in the cell inner membrane. Its subcellular location is the cytoplasm. It catalyses the reaction ATP + H2O + cellular proteinSide 1 = ADP + phosphate + cellular proteinSide 2.. In terms of biological role, part of the Sec protein translocase complex. Interacts with the SecYEG preprotein conducting channel. Has a central role in coupling the hydrolysis of ATP to the transfer of proteins into and across the cell membrane, serving as an ATP-driven molecular motor driving the stepwise translocation of polypeptide chains across the membrane. The sequence is that of Protein translocase subunit SecA from Chlamydia muridarum (strain MoPn / Nigg).